Reading from the N-terminus, the 446-residue chain is Methionine aminopeptidase 2 (446 aa).

Residues 1–85 (MAGVTEGEDT…KNKKKKKKKI (85 aa)) are disordered. Positions 8–32 (EDTKVIESKINELNIDKPKLEDNNE) are enriched in basic and acidic residues. Over residues 42 to 58 (SGDDDDDDKEEDDDNEI) the composition is skewed to acidic residues. The span at 73–85 (KKNKNKKKKKKKI) shows a compositional bias: basic residues. A substrate-binding site is contributed by histidine 197. The a divalent metal cation site is built by aspartate 217, aspartate 228, and histidine 299. Residue histidine 307 coordinates substrate. Positions 332 and 427 each coordinate a divalent metal cation.

It belongs to the peptidase M24A family. Methionine aminopeptidase eukaryotic type 2 subfamily. Co(2+) serves as cofactor. Zn(2+) is required as a cofactor. Requires Mn(2+) as cofactor. It depends on Fe(2+) as a cofactor.

It is found in the cytoplasm. The enzyme catalyses Release of N-terminal amino acids, preferentially methionine, from peptides and arylamides.. In terms of biological role, cotranslationally removes the N-terminal methionine from nascent proteins. The N-terminal methionine is often cleaved when the second residue in the primary sequence is small and uncharged (Met-Ala-, Cys, Gly, Pro, Ser, Thr, or Val). This chain is Methionine aminopeptidase 2, found in Candida albicans (strain SC5314 / ATCC MYA-2876) (Yeast).